A 128-amino-acid chain; its full sequence is uncharacterized protein (128 aa).

This is an uncharacterized protein from Saccharomyces cerevisiae (strain ATCC 204508 / S288c) (Baker's yeast).